A 248-amino-acid polypeptide reads, in one-letter code: DNA repair protein RecO (248 aa).

Belongs to the RecO family.

Its function is as follows. Involved in DNA repair and RecF pathway recombination. The chain is DNA repair protein RecO from Rubrobacter xylanophilus (strain DSM 9941 / JCM 11954 / NBRC 16129 / PRD-1).